Reading from the N-terminus, the 216-residue chain is Large ribosomal subunit protein bL25 (216 aa).

Disordered regions lie at residues 1 to 21 (MAET…GAVR) and 192 to 216 (SADN…GKED). Residues 195 to 216 (NEAKTEEAGEDKSEEKSSGKED) show a composition bias toward basic and acidic residues.

It belongs to the bacterial ribosomal protein bL25 family. CTC subfamily. In terms of assembly, part of the 50S ribosomal subunit; part of the 5S rRNA/L5/L18/L25 subcomplex. Contacts the 5S rRNA. Binds to the 5S rRNA independently of L5 and L18.

Its function is as follows. This is one of the proteins that binds to the 5S RNA in the ribosome where it forms part of the central protuberance. In Parvibaculum lavamentivorans (strain DS-1 / DSM 13023 / NCIMB 13966), this protein is Large ribosomal subunit protein bL25.